A 339-amino-acid polypeptide reads, in one-letter code: Uroporphyrinogen decarboxylase (339 aa).

Residues 21-25, aspartate 71, tyrosine 147, serine 202, and histidine 315 each bind substrate; that span reads RQAGR.

It belongs to the uroporphyrinogen decarboxylase family. As to quaternary structure, homodimer.

It localises to the cytoplasm. It catalyses the reaction uroporphyrinogen III + 4 H(+) = coproporphyrinogen III + 4 CO2. Its pathway is porphyrin-containing compound metabolism; protoporphyrin-IX biosynthesis; coproporphyrinogen-III from 5-aminolevulinate: step 4/4. Its function is as follows. Catalyzes the decarboxylation of four acetate groups of uroporphyrinogen-III to yield coproporphyrinogen-III. The chain is Uroporphyrinogen decarboxylase from Helicobacter pylori (strain HPAG1).